The primary structure comprises 217 residues: Large ribosomal subunit protein uL4c (217 aa).

Residues 51 to 85 (HRNRNAHTQTRGEVSGGGRKPWKQKGTGRARAGSN) are disordered.

Belongs to the universal ribosomal protein uL4 family. In terms of assembly, part of the 50S ribosomal subunit.

The protein localises to the plastid. Its subcellular location is the chloroplast. Probably binds the 23S rRNA. The protein is Large ribosomal subunit protein uL4c (rpl4) of Gracilaria tenuistipitata var. liui (Red alga).